The primary structure comprises 215 residues: MVRGCRVGQRTGTVGVRVFPVGLCALSLQARDCRGMCGKRLGKVMVLGCMLPGVAARVSLSPKLGVYGDARGGSDLWGICIQAPTMPDTENQAPPRYAPETPLVGLDVAFRAENGFLLQLTVDAALTRLMFCGRCLAGYSFRPGEGSTHLSVAAGFECTALIYDSQHFLSVLGQGLLQPSSSSYSAGNWHRPRSLLGVLTCTAKEVGAIHEESAY.

It to T.pallidum TP_0127, TP_0618 and TP_0619.

This is an uncharacterized protein from Treponema pallidum (strain Nichols).